A 454-amino-acid polypeptide reads, in one-letter code: MMTKETIVAQATPIGRGGVGILRVSGPLATEVAKAVVDKELKPRMANYLPFKDEDGTILDQGIALYFKSPNSFTGEDVVEFQGHGGQVVLDLLLKRILQVKGVRLARPGEFSEQAFLNDKLDLAQAEAIADLINASSEQAARSALKSLQGEFSKKINQLVDSVIYLRTYVEAAIDFPDEEIDFLADGKIEGHLNDLIGQLDKVRSEAKQGSILREGMKVVIAGRPNAGKSSLLNALAGREAAIVTDIAGTTRDVLREHIHIDGMPLHIIDTAGLRDATDEVERIGITRAWNEIEQADRVILMLDSTDPDSKDLDQAKAEFLSKLPGNIPVTIVRNKSDLSGEKESIEEQEGFTVIRLSAQTQQGVSLLREHLKQSMGYQTGTEGGFLARRRHLEALEHAAEHLQIGRVQLTQFHAGELLAEELRIVQDYLGEITGKFTSDDLLGNIFSSFCIGK.

Residues R23, E80, and K120 each coordinate (6S)-5-formyl-5,6,7,8-tetrahydrofolate. Positions 216–377 (GMKVVIAGRP…LREHLKQSMG (162 aa)) constitute a TrmE-type G domain. N226 contacts K(+). GTP is bound by residues 226–231 (NAGKSS), 245–251 (TDIAGTT), and 270–273 (DTAG). A Mg(2+)-binding site is contributed by S230. Residues T245, I247, and T250 each coordinate K(+). T251 is a binding site for Mg(2+). Residue K454 participates in (6S)-5-formyl-5,6,7,8-tetrahydrofolate binding.

This sequence belongs to the TRAFAC class TrmE-Era-EngA-EngB-Septin-like GTPase superfamily. TrmE GTPase family. Homodimer. Heterotetramer of two MnmE and two MnmG subunits. K(+) serves as cofactor.

It is found in the cytoplasm. Its function is as follows. Exhibits a very high intrinsic GTPase hydrolysis rate. Involved in the addition of a carboxymethylaminomethyl (cmnm) group at the wobble position (U34) of certain tRNAs, forming tRNA-cmnm(5)s(2)U34. The polypeptide is tRNA modification GTPase MnmE (Mannheimia succiniciproducens (strain KCTC 0769BP / MBEL55E)).